The primary structure comprises 339 residues: DNA-directed RNA polymerase subunit alpha (339 aa).

Residues 1–235 (MVIQKNWQEL…DQLQVFVNFE (235 aa)) form an alpha N-terminal domain (alpha-NTD) region. An alpha C-terminal domain (alpha-CTD) region spans residues 251-339 (FNPALLKKVD…DLAKRFEEHY (89 aa)).

This sequence belongs to the RNA polymerase alpha chain family. Homodimer. The RNAP catalytic core consists of 2 alpha, 1 beta, 1 beta' and 1 omega subunit. When a sigma factor is associated with the core the holoenzyme is formed, which can initiate transcription.

The catalysed reaction is RNA(n) + a ribonucleoside 5'-triphosphate = RNA(n+1) + diphosphate. In terms of biological role, DNA-dependent RNA polymerase catalyzes the transcription of DNA into RNA using the four ribonucleoside triphosphates as substrates. The polypeptide is DNA-directed RNA polymerase subunit alpha (Methylobacterium radiotolerans (strain ATCC 27329 / DSM 1819 / JCM 2831 / NBRC 15690 / NCIMB 10815 / 0-1)).